The sequence spans 483 residues: V-type proton ATPase subunit H (483 aa).

The residue at position 483 (Ser483) is a Phosphoserine.

The protein belongs to the V-ATPase H subunit family. In terms of assembly, V-ATPase is a heteromultimeric enzyme made up of two complexes: the ATP-hydrolytic V1 complex and the proton translocation V0 complex. The V1 complex consists of three catalytic AB heterodimers that form a heterohexamer, three peripheral stalks each consisting of EG heterodimers, one central rotor including subunits D and F, and the regulatory subunits C and H. The proton translocation complex V0 consists of the proton transport subunit a, a ring of proteolipid subunits c9c'', rotary subunit d, subunits e and f, and the accessory subunits ATP6AP1/Ac45 and ATP6AP2/PRR. Interacts with AP2M1. As to expression, expressed in brain (at protein level).

The protein localises to the cytoplasmic vesicle. The protein resides in the clathrin-coated vesicle membrane. Subunit of the V1 complex of vacuolar(H+)-ATPase (V-ATPase), a multisubunit enzyme composed of a peripheral complex (V1) that hydrolyzes ATP and a membrane integral complex (V0) that translocates protons. V-ATPase is responsible for acidifying and maintaining the pH of intracellular compartments and in some cell types, is targeted to the plasma membrane, where it is responsible for acidifying the extracellular environment. Subunit H is essential for V-ATPase activity, but not for the assembly of the complex. Involved in the endocytosis mediated by clathrin-coated pits, required for the formation of endosomes. This is V-type proton ATPase subunit H (ATP6V1H) from Bos taurus (Bovine).